Reading from the N-terminus, the 388-residue chain is Calreticulin (388 aa).

Positions Met-1–Ala-17 are cleaved as a signal peptide. The cysteines at positions 103 and 135 are disulfide-linked. 4 residues coordinate an alpha-D-glucoside: Tyr-107, Lys-109, Tyr-126, and Asp-133. 7 repeat units span residues Ala-189–Phe-200, Asp-208–Glu-219, Asp-225–Lys-236, Asp-242–Asp-253, Gly-257–Pro-267, Gly-271–Pro-281, and Gly-285–Pro-295. A 4 X approximate repeats region spans residues Ala-189–Asp-253. The segment at Glu-193–Ala-282 is disordered. A compositionally biased stretch (basic and acidic residues) spans Lys-205–Glu-215. Over residues Asp-216–Asp-227 the composition is skewed to acidic residues. The segment covering Asp-228–Glu-249 has biased composition (basic and acidic residues). Residues Asp-250 to Trp-259 are compositionally biased toward acidic residues. The segment at Gly-257–Pro-295 is 3 X approximate repeats. An alpha-D-glucoside is bound at residue Asp-315. The disordered stretch occupies residues Arg-349–Lys-388. Composition is skewed to basic residues over residues Lys-354–Lys-365 and Lys-373–Lys-388.

The protein belongs to the calreticulin family.

It is found in the endoplasmic reticulum lumen. Its function is as follows. Molecular calcium-binding chaperone promoting folding, oligomeric assembly and quality control in the ER via the calreticulin/calnexin cycle. This lectin may interact transiently with almost all of the monoglucosylated glycoproteins that are synthesized in the ER. The chain is Calreticulin (crt-1) from Onchocerca volvulus.